The following is a 382-amino-acid chain: Pyrimidine monooxygenase RutA (382 aa).

FMN contacts are provided by residues 68–69 (IK), asparagine 134, glutamate 143, 159–160 (RY), and serine 209.

The protein belongs to the NtaA/SnaA/DszA monooxygenase family. RutA subfamily.

The catalysed reaction is uracil + FMNH2 + NADH + O2 = (Z)-3-ureidoacrylate + FMN + NAD(+) + H2O + H(+). It carries out the reaction thymine + FMNH2 + NADH + O2 = (Z)-2-methylureidoacrylate + FMN + NAD(+) + H2O + H(+). Its function is as follows. Catalyzes the pyrimidine ring opening between N-3 and C-4 by an unusual flavin hydroperoxide-catalyzed mechanism, adding oxygen atoms in the process to yield ureidoacrylate peracid, that immediately reacts with FMN forming ureidoacrylate and FMN-N(5)-oxide. The FMN-N(5)-oxide reacts spontaneously with NADH to produce FMN. Requires the flavin reductase RutF to regenerate FMN in vivo. This chain is Pyrimidine monooxygenase RutA, found in Escherichia coli (strain 55989 / EAEC).